The primary structure comprises 239 residues: Ribonuclease PH (239 aa).

Phosphate is bound by residues Arg-86 and 124–126 (GTR).

It belongs to the RNase PH family. In terms of assembly, homohexameric ring arranged as a trimer of dimers.

It carries out the reaction tRNA(n+1) + phosphate = tRNA(n) + a ribonucleoside 5'-diphosphate. In terms of biological role, phosphorolytic 3'-5' exoribonuclease that plays an important role in tRNA 3'-end maturation. Removes nucleotide residues following the 3'-CCA terminus of tRNAs; can also add nucleotides to the ends of RNA molecules by using nucleoside diphosphates as substrates, but this may not be physiologically important. Probably plays a role in initiation of 16S rRNA degradation (leading to ribosome degradation) during starvation. The polypeptide is Ribonuclease PH (Sinorhizobium medicae (strain WSM419) (Ensifer medicae)).